We begin with the raw amino-acid sequence, 595 residues long: Phytoene desaturase (595 aa).

The first 23 residues, 1-23 (MAETQRPRSAIIVGAGAGGIAVA), serve as a signal peptide directing secretion. A helical membrane pass occupies residues 574–594 (SQRAFPLLVALMGVLYFLLFV).

It belongs to the carotenoid/retinoid oxidoreductase family. NAD(+) is required as a cofactor.

It localises to the membrane. It carries out the reaction 15-cis-phytoene + A = all-trans-phytofluene + AH2. The enzyme catalyses all-trans-phytofluene + A = all-trans-zeta-carotene + AH2. It catalyses the reaction all-trans-zeta-carotene + A = all-trans-neurosporene + AH2. The catalysed reaction is all-trans-neurosporene + A = all-trans-lycopene + AH2. It carries out the reaction all-trans-lycopene + A = all-trans-3,4-didehydrolycopene + AH2. The protein operates within carotenoid biosynthesis; lycopene biosynthesis. Functionally, phytoene desaturase involved in the carotenoid biosynthesis pathway. Converts phytoene into 3,4-didehydrolycopene via the intermediates phytofluene, zeta-carotene, neurosporene and lycopene, by introducing up to five double bonds into phytoene. Is also able to desaturate 1-hydroxyneurosporene into 1-hydroxylycopene and 1-hydroxylycopene into 1-hydroxy-3,4-didehydrolycopene. Gamma-carotene and 1,19-dihydroxylycopene are not accepted as substrates. Neurosporaxanthin is synthesized from geranyl-geranyl pyrophosphate (GGPP) through several enzymatic activities. Phytoene synthase activity performed by the bifunctional enzyme al-2 first produces phytoene from geranyl-geranyl pyrophosphate (GGPP). The phytoene dehydrogenase al-1 then introduces 5 desaturations to lead to 3,4-didehydrolycopene via the intermediates phytofluene, zeta-carotene, neurosporene and lycopene. Al-2 cyclase activity then converts 3,4-didehydrolycopene into torulene. Al-2 can also convet lycopene into gamma-carotene which in turn is converted to beta-carotene by an additional al-2 cyclization reaction. Torulene is the substrate of the dioxidase cao-2 that breaks the molecule, removing five carbon atoms to yield beta-apo-4'-carotenal, whereas the aldehyde dehydrogenase ylo-1 mediates the last step by converting beta-apo-4'-carotenal into neurosporaxanthin. The sequence is that of Phytoene desaturase from Neurospora crassa (strain ATCC 24698 / 74-OR23-1A / CBS 708.71 / DSM 1257 / FGSC 987).